The primary structure comprises 416 residues: Phosphoglycerate kinase (416 aa).

Positions 23, 24, 25, 26, 38, 39, 62, 63, 65, 66, 121, 122, 168, and 169 each coordinate (2R)-3-phosphoglycerate. G212 contributes to the ADP binding site. G212 contacts CDP. The AMP site is built by A213 and K214. A213 lines the ATP pocket. A213 contributes to the Mg(2+) binding site. Residues A216 and D217 each contribute to the Mg(2+) site. D217 lines the CDP pocket. An AMP-binding site is contributed by K218. K218 lines the ATP pocket. An ADP-binding site is contributed by G236. G236 lines the CDP pocket. G237 and G311 together coordinate AMP. ATP is bound by residues G237 and G311. CDP contacts are provided by G336 and F341. F341 contributes to the ADP binding site. Residue E342 coordinates AMP. E342, D373, and T374 together coordinate ATP. D373 contacts Mg(2+).

Belongs to the phosphoglycerate kinase family. In terms of assembly, monomer. Mg(2+) serves as cofactor.

Its subcellular location is the cytoplasm. It localises to the mitochondrion. The catalysed reaction is (2R)-3-phosphoglycerate + ATP = (2R)-3-phospho-glyceroyl phosphate + ADP. It functions in the pathway carbohydrate degradation; glycolysis; pyruvate from D-glyceraldehyde 3-phosphate: step 2/5. Its function is as follows. Catalyzes one of the two ATP producing reactions in the glycolytic pathway via the reversible conversion of 1,3-diphosphoglycerate to 3-phosphoglycerate. Both L- and D- forms of purine and pyrimidine nucleotides can be used as substrates, but the activity is much lower on pyrimidines. Negatively regulates the biosynthesis of acetyl-CoA from pyruvate in the mitochondrion. This is Phosphoglycerate kinase (PGK1) from Eremothecium gossypii (strain ATCC 10895 / CBS 109.51 / FGSC 9923 / NRRL Y-1056) (Yeast).